The chain runs to 257 residues: Hydroxyacylglutathione hydrolase (257 aa).

Residues histidine 54, histidine 56, aspartate 58, histidine 59, histidine 110, aspartate 131, and histidine 169 each coordinate Zn(2+).

This sequence belongs to the metallo-beta-lactamase superfamily. Glyoxalase II family. In terms of assembly, monomer. Zn(2+) serves as cofactor.

The catalysed reaction is an S-(2-hydroxyacyl)glutathione + H2O = a 2-hydroxy carboxylate + glutathione + H(+). It functions in the pathway secondary metabolite metabolism; methylglyoxal degradation; (R)-lactate from methylglyoxal: step 2/2. Its function is as follows. Thiolesterase that catalyzes the hydrolysis of S-D-lactoyl-glutathione to form glutathione and D-lactic acid. This Hahella chejuensis (strain KCTC 2396) protein is Hydroxyacylglutathione hydrolase.